We begin with the raw amino-acid sequence, 476 residues long: Hyaluronidase-2 (476 aa).

Residues 1-20 form the signal peptide; sequence MWTGLGPAVTLALVLVVAWA. 2 disulfide bridges follow: Cys-47–Cys-343 and Cys-214–Cys-230. N-linked (GlcNAc...) asparagine glycosylation is found at Asn-77 and Asn-106. Glu-138 acts as the Proton donor in catalysis. N-linked (GlcNAc...) asparagine glycans are attached at residues Asn-340 and Asn-360. Residues 364 to 442 enclose the EGF-like domain; sequence AAQYCSWAQC…YLGWGGEQCQ (79 aa). 3 disulfides stabilise this stretch: Cys-368–Cys-379, Cys-373–Cys-430, and Cys-432–Cys-441. A lipid anchor (GPI-anchor amidated glycine) is attached at Gly-451. Positions 452–476 are cleaved as a propeptide — removed in mature form; the sequence is ASGAWAGSHLTGLLAVAVLAFTWTS.

Belongs to the glycosyl hydrolase 56 family. As to quaternary structure, interacts with MST1R. In terms of assembly, (Microbial infection) Interacts with Jaagsiekte sheep retrovirus (JSRV) envelope proteins.

It localises to the cell membrane. It catalyses the reaction Random hydrolysis of (1-&gt;4)-linkages between N-acetyl-beta-D-glucosamine and D-glucuronate residues in hyaluronate.. Catalyzes hyaluronan degradation into small fragments that are endocytosed and degraded in lysosomes by HYAL1 and exoglycosidases. Essential for the breakdown of extracellular matrix hyaluronan. The polypeptide is Hyaluronidase-2 (HYAL2) (Ovis aries (Sheep)).